Reading from the N-terminus, the 23-residue chain is Basic phospholipase A2 CTs-G6 (23 aa).

Requires Ca(2+) as cofactor. In terms of processing, contains 7 disulfide bonds. Expressed by the venom gland.

It is found in the secreted. The enzyme catalyses a 1,2-diacyl-sn-glycero-3-phosphocholine + H2O = a 1-acyl-sn-glycero-3-phosphocholine + a fatty acid + H(+). In terms of biological role, snake venom phospholipase A2 (PLA2) that induces local edema a few hours after injection (5-10 ug) in the hind paw. PLA2 catalyzes the calcium-dependent hydrolysis of the 2-acyl groups in 3-sn-phosphoglycerides. The protein is Basic phospholipase A2 CTs-G6 of Trimeresurus stejnegeri (Chinese green tree viper).